The primary structure comprises 146 residues: Hemoglobin cathodic subunit beta (146 aa).

A Globin domain is found at 2–146 (EWSASERSTI…VVSALSKQYF (145 aa)). Heme b contacts are provided by His63 and His92.

It belongs to the globin family. Heterotetramer of two alpha chains and two beta chains. Red blood cells.

Its function is as follows. Involved in oxygen transport from gills to the various peripheral tissues. The chain is Hemoglobin cathodic subunit beta (hbb2) from Anguilla anguilla (European freshwater eel).